Reading from the N-terminus, the 512-residue chain is Acid-sensing ion channel 2 (512 aa).

Residues 1 to 37 are Cytoplasmic-facing; it reads MDLKESPSEGSLQPSSIQIFANTSTLHGIRHIFVYGP. 2 positions are modified to phosphoserine: Ser-8 and Ser-11. A helical transmembrane segment spans residues 38–58; it reads LTIRRVLWAVAFVGSLGLLLV. The Extracellular segment spans residues 59-427; sequence ESSERVSYYF…EQKKAYEVAA (369 aa). Cystine bridges form between Cys-92–Cys-193, Cys-289–Cys-364, Cys-307–Cys-360, Cys-311–Cys-358, Cys-320–Cys-342, and Cys-322–Cys-334. N-linked (GlcNAc...) asparagine glycosylation is found at Asn-365 and Asn-392. A helical transmembrane segment spans residues 428–448; it reads LLGDIGGQMGLFIGASILTIL. Positions 441–443 match the GAS motif; ion selectivity filter motif; that stretch reads GAS. The Cytoplasmic segment spans residues 449 to 512; it reads ELFDYIYELI…ALGTLEEIAC (64 aa).

The protein belongs to the amiloride-sensitive sodium channel (TC 1.A.6) family. ASIC2 subfamily. Can form homotrimers. Heterotrimer; forms functional heterotrimers producing channel with different properties. Forms heterotrimers with ASIC1; while ASIC1 determines current amplitude, ASIC2 influences the properties of the current. Forms heterotrimers with ASIC3; resulting in channels with distinct properties. Interacts with STOM; STOM regulates the gating of ASIC2-containing channels. Interacts with PICK1; promotes ASIC3 phosphorylation by PKC and activation of ASIC2/ASIC3 heterotrimers. In terms of tissue distribution, expressed by sensory neurons. Expressed by nociceptive sensory neurons, spiral ganglion (SG) neurons and the retina (at protein level). Expressed in outer nuclear layer of retina (photoreceptors) and to a lower extent in distal and proximal inner nuclear layer.

It localises to the cell membrane. The enzyme catalyses Na(+)(in) = Na(+)(out). It catalyses the reaction K(+)(in) = K(+)(out). It carries out the reaction Li(+)(in) = Li(+)(out). With respect to regulation, inhibited by the diuretic drug amiloride. Forms pH-gated trimeric sodium channels that act as postsynaptic excitatory sensors in the nervous system. Upon extracellular acidification, these channels generate rapid, transient inward currents that fully desensitize. Highly selective for sodium, they are permeable to other cations. By forming heterotrimeric channels with ASIC1, could contribute to synaptic plasticity, learning, and memory. Additionally, as acid sensors at nerve terminals, plays a role in mechanosensation and phototransduction. In terms of biological role, has no pH-gated sodium channel activity per se but can associate with other ASICs to produce functional channels with specific properties. This Mus musculus (Mouse) protein is Acid-sensing ion channel 2.